The chain runs to 698 residues: Interleukin-17 receptor C (698 aa).

The first 21 residues, 1–21, serve as a signal peptide directing secretion; the sequence is MPVSWFLLSLALGRNPVVVSL. The Extracellular segment spans residues 22-464; that stretch reads ERLMEPQDTA…CPMDKYIHRR (443 aa). N-linked (GlcNAc...) asparagine glycosylation occurs at Asn182. Cys190 and Cys202 are oxidised to a cystine. 4 N-linked (GlcNAc...) asparagine glycosylation sites follow: Asn209, Asn249, Asn255, and Asn259. 6 cysteine pairs are disulfide-bonded: Cys266–Cys316, Cys268–Cys284, Cys325–Cys334, Cys364–Cys378, Cys406–Cys413, and Cys440–Cys455. A helical transmembrane segment spans residues 465-485; that stretch reads WVLVWLACLLLAAALFFFLLL. Residues 486–698 are Cytoplasmic-facing; it reads KKDRRKAARG…WDLGPCTTLE (213 aa). Positions 496-645 constitute an SEFIR domain; that stretch reads SRTALLLHSA…LPSQLPAFLD (150 aa).

In terms of assembly, homodimer; disulfide-linked. Heterodimer with IL17RA. Heterodimerization with IL17RA is independent of the cytoplasmic tail. Associates with non-glycosylated IL17RA constitutively. Binding of IL17A and IL17F induces association with glycosylated IL17RA. Forms complexes with 2:1 binding stoichiometry: two receptor chains for one interleukin molecule. IL17A homodimer preferentially drives the formation of IL17RA-IL17RC heterodimeric receptor complex, whereas IL17F homodimer forms predominantly complexes with IL17RC homodimer. IL17A-IL17F forms complexes with IL17RA-IL17RC, but with lower affinity when compared to IL17A homodimer. IL17RC chain cannot distinguish between IL17A and IL17F molecules, potentially enabling the formation of topologically distinct complexes. Interacts (through SEFIR domain and extended downstream region) with TRAF3IP2/ACT1 (phosphorylated). As to expression, highly expressed in colonic epithelial cells. Expressed in lung epithelial cells. Expressed in macrophages. Highly expressed in B-1a B cells and at a lower extent in B-1b and B-2 B cells (at protein level).

It is found in the cell membrane. Functionally, receptor for IL17A and IL17F, major effector cytokines of innate and adaptive immune system involved in antimicrobial host defense and maintenance of tissue integrity. Receptor for IL17A and IL17F homodimers as part of a heterodimeric complex with IL17RA. Receptor for the heterodimer formed by IL17A and IL17B as part of a heterodimeric complex with IL17RA. Has also been shown to be the cognate receptor for IL17F and to bind IL17A with high affinity without the need for IL17RA. Upon binding of IL17F homodimer triggers downstream activation of TRAF6 and NF-kappa-B signaling pathway. Induces transcriptional activation of IL33, a potent cytokine that stimulates group 2 innate lymphoid cells and adaptive T-helper 2 cells involved in pulmonary allergic response to fungi. Promotes sympathetic innervation of peripheral organs by coordinating the communication between gamma-delta T cells and parenchymal cells. Stimulates sympathetic innervation of thermogenic adipose tissue by driving TGFB1 expression. Binding of IL17A-IL17F to IL17RA-IL17RC heterodimeric receptor complex triggers homotypic interaction of IL17RA and IL17RC chains with TRAF3IP2 adapter through SEFIR domains. This leads to downstream TRAF6-mediated activation of NF-kappa-B and MAPkinase pathways ultimately resulting in transcriptional activation of cytokines, chemokines, antimicrobial peptides and matrix metalloproteinases, with potential strong immune inflammation. Primarily induces neutrophil activation and recruitment at infection and inflammatory sites. Stimulates the production of antimicrobial beta-defensins DEFB1, DEFB103A, and DEFB104A by mucosal epithelial cells, limiting the entry of microbes through the epithelial barriers. The protein is Interleukin-17 receptor C (Il17rc) of Mus musculus (Mouse).